We begin with the raw amino-acid sequence, 1033 residues long: Translation initiation factor IF-2 (1033 aa).

The tract at residues 49-432 is disordered; the sequence is AFQQGGGNGR…APSVGGVMLP (384 aa). The span at 59–113 shows a compositional bias: low complexity; the sequence is SAGRPAAPKKAAPRPSAPSPAQAGPSQAAPAAGDRAAAPRPSAAPKAPAAQQPAA. Composition is skewed to pro residues over residues 114–140 and 148–164; these read PSAPAPAPSQGPRPTPGPKPAPRPAPA and PAAPAAPSTPAPAPSGP. The span at 171–189 shows a compositional bias: low complexity; that stretch reads PGAPKPGGARPSGPGQDRG. A compositionally biased stretch (gly residues) spans 190–201; that stretch reads QQGGQGRPGGQR. The segment covering 236–246 has biased composition (pro residues); the sequence is APRPQGGPRPG. Over residues 247–268 the composition is skewed to gly residues; it reads GPGGAPGGGPRPQGPGGQGGGP. Over residues 305-314 the composition is skewed to low complexity; sequence MMPQRPAAGP. The segment covering 318–401 has biased composition (gly residues); sequence PGGGGRGPGG…GTQGAFGRPG (84 aa). The segment covering 405 to 414 has biased composition (basic residues); the sequence is RRGRKSKRQR. One can recognise a tr-type G domain in the interval 526 to 698; sequence VRPPVVTVMG…VVLTADASLD (173 aa). The G1 stretch occupies residues 535–542; that stretch reads GHVDHGKT. A GTP-binding site is contributed by 535 to 542; the sequence is GHVDHGKT. A G2 region spans residues 560-564; it reads GITQH. Positions 585–588 are G3; it reads DTPG. Residues 585-589 and 639-642 contribute to the GTP site; these read DTPGH and NKID. Positions 639 to 642 are G4; that stretch reads NKID. The segment at 675 to 677 is G5; it reads SAK.

The protein belongs to the TRAFAC class translation factor GTPase superfamily. Classic translation factor GTPase family. IF-2 subfamily.

The protein resides in the cytoplasm. Its function is as follows. One of the essential components for the initiation of protein synthesis. Protects formylmethionyl-tRNA from spontaneous hydrolysis and promotes its binding to the 30S ribosomal subunits. Also involved in the hydrolysis of GTP during the formation of the 70S ribosomal complex. This chain is Translation initiation factor IF-2, found in Streptomyces coelicolor (strain ATCC BAA-471 / A3(2) / M145).